A 111-amino-acid chain; its full sequence is Denmotoxin (111 aa).

A signal peptide spans 1 to 19; that stretch reads MKTLLLAVAVVAFVCLGSA. Residues 20–34 constitute a propeptide that is removed on maturation; it reads DQLGLGRQQIDWGQG. Residue Gln35 is modified to Pyrrolidone carboxylic acid. 5 disulfide bridges follow: Cys44–Cys68, Cys47–Cys55, Cys61–Cys87, Cys91–Cys102, and Cys103–Cys108.

Monomer. As to expression, expressed by the venom gland.

Its subcellular location is the secreted. In terms of biological role, this bird-specific postsynaptic neurotoxin irreversibly binds and inhibits the chick muscle alpha-1-beta-1-gamma-delta (CHRNA1-CHRNB1-CHRNG-CHNRD) nicotinic acetylcholine receptor (nAChR) 100-fold more compared with the mouse receptor. The weak binding to mouse receptor is reversible. The protein is Denmotoxin of Boiga dendrophila (Mangrove snake).